We begin with the raw amino-acid sequence, 659 residues long: Crossover junction endonuclease MUS81 (659 aa).

Positions 59 to 78 (KDLSQIKGFGKWMVKLMKGY) match the Helix-hairpin-helix motif 1 motif. The ERCC4 domain occupies 404-503 (ILILDDREKF…KKLIYILEGD (100 aa)). Residues 585–622 (TISDVFAIQLMQVPQVTEEIAIAVLDMYPTLLSLASAY) carry the Helix-hairpin-helix motif 2 motif.

Belongs to the XPF family. Forms a heterodimer with EME1A or EME1B. Requires Mg(2+) as cofactor. Ca(2+) serves as cofactor. Ubiquitous but preferentially expressed in young flowers buds, notably in anthers.

The protein resides in the nucleus. It is found in the nucleolus. In terms of biological role, interacts with EME1 to form a DNA structure-specific endonuclease with substrate preference for branched DNA structures with a 5'-end at the branch nick. Typical substrates include 3'-flap structures, D-loops, replication forks, nicked Holliday junctions and also intact Holliday junctions with a reduced efficiency. May be required in mitosis for the processing of stalled or collapsed replication fork intermediates. Plays a role in DNA repair and in genotoxic stress-induced homologous recombination (HR) in somatic cells. Mediates a subset of meiotic recombination events that are insensitive to crossover interference. Together with SEND1, essential for the resolution of toxic replication structures to ensure genome stability, and to maintain telomere integrity and replication. This chain is Crossover junction endonuclease MUS81, found in Arabidopsis thaliana (Mouse-ear cress).